The primary structure comprises 643 residues: Leukocyte immunoglobulin-like receptor subfamily B member 5 (643 aa).

Residues M1 to A23 form the signal peptide. Topologically, residues G24–G458 are extracellular. Ig-like C2-type domains are found at residues P27–V116, D111–I228, P224–D313, and G337–S418. A disulfide bond links C49 and C98. N139 carries an N-linked (GlcNAc...) asparagine glycan. 2 disulfide bridges follow: C144-C195 and C244-C295. 2 N-linked (GlcNAc...) asparagine glycosylation sites follow: N279 and N339. A disulfide bond links C344 and C395. A compositionally biased stretch (low complexity) spans V417 to P433. A disordered region spans residues V417–P449. The helical transmembrane segment at V459 to L479 threads the bilayer. Residues R480–H643 are Cytoplasmic-facing. Residues F493–H643 form a disordered region. S514 bears the Phosphoserine mark. Composition is skewed to basic and acidic residues over residues T531–D549, E557–M567, and L579–M592. The short motif at V605 to L610 is the ITIM motif 1 element. A compositionally biased stretch (basic and acidic residues) spans L615–P631. An ITIM motif 2 motif is present at residues S635–L640.

It is found in the membrane. In terms of biological role, may act as receptor for class I MHC antigens. This chain is Leukocyte immunoglobulin-like receptor subfamily B member 5 (LILRB5), found in Pan troglodytes (Chimpanzee).